The chain runs to 404 residues: Cysteine desulfurase IscS (404 aa).

Residues 75–76 (AT), Asn155, Gln183, and 203–205 (SGH) contribute to the pyridoxal 5'-phosphate site. Lys206 is subject to N6-(pyridoxal phosphate)lysine. Thr243 serves as a coordination point for pyridoxal 5'-phosphate. Cys328 acts as the Cysteine persulfide intermediate in catalysis. Cys328 serves as a coordination point for [2Fe-2S] cluster.

This sequence belongs to the class-V pyridoxal-phosphate-dependent aminotransferase family. NifS/IscS subfamily. In terms of assembly, homodimer. Forms a heterotetramer with IscU, interacts with other sulfur acceptors. Pyridoxal 5'-phosphate serves as cofactor.

It is found in the cytoplasm. It carries out the reaction (sulfur carrier)-H + L-cysteine = (sulfur carrier)-SH + L-alanine. Its pathway is cofactor biosynthesis; iron-sulfur cluster biosynthesis. In terms of biological role, master enzyme that delivers sulfur to a number of partners involved in Fe-S cluster assembly, tRNA modification or cofactor biosynthesis. Catalyzes the removal of elemental sulfur and selenium atoms from cysteine and selenocysteine to produce alanine. Functions as a sulfur delivery protein for Fe-S cluster synthesis onto IscU, an Fe-S scaffold assembly protein, as well as other S acceptor proteins. Also functions as a selenium delivery protein in the pathway for the biosynthesis of selenophosphate. The polypeptide is Cysteine desulfurase IscS (Salmonella arizonae (strain ATCC BAA-731 / CDC346-86 / RSK2980)).